The following is a 595-amino-acid chain: Actin-histidine N-methyltransferase (595 aa).

The segment at 1 to 22 (MGKKSRVKTQKSGTGATATVSP) is disordered. Over residues 10–20 (QKSGTGATATV) the composition is skewed to polar residues. S-adenosyl-L-methionine is bound by residues R75, 104-106 (EGF), R254, 275-279 (DMCNH), and 325-327 (SGF). The SET domain occupies 94–314 (EGFEMVNFKE…AGEQIYIFYG (221 aa)). The residue at position 513 (S513) is a Phosphoserine. Positions 549-563 (ENGLVNGENSIPNGT) are enriched in polar residues. The segment at 549–595 (ENGLVNGENSIPNGTRSEDENLNQEESKRAVEDAKGSSSDRADAVKE) is disordered. Residues 573 to 595 (EESKRAVEDAKGSSSDRADAVKE) show a composition bias toward basic and acidic residues.

Belongs to the class V-like SAM-binding methyltransferase superfamily. SETD3 actin-histidine methyltransferase family. As to quaternary structure, interacts with MYOD1. In terms of processing, phosphorylated by GSK3B, which is required for recognition by the SCF(FBXW7) complex and subsequent degradation. Ubiquitinated by the SCF(FBXW7) complex following phosphorylation by GSK3B, leading to its degradation by the proteasome.

The protein localises to the cytoplasm. The protein resides in the nucleus. It catalyses the reaction L-histidyl-[protein] + S-adenosyl-L-methionine = N(tele)-methyl-L-histidyl-[protein] + S-adenosyl-L-homocysteine + H(+). Protein-histidine N-methyltransferase that specifically mediates 3-methylhistidine (tele-methylhistidine) methylation of actin at 'His-73'. Histidine methylation of actin is required for smooth muscle contraction of the laboring uterus during delivery. Does not have protein-lysine N-methyltransferase activity and probably only catalyzes histidine methylation of actin. The polypeptide is Actin-histidine N-methyltransferase (Callithrix jacchus (White-tufted-ear marmoset)).